Here is an 853-residue protein sequence, read N- to C-terminus: A-kinase anchor protein 3 (853 aa).

The tract at residues 124–137 (VSFYANRLTNLVIA) is PKA-RII subunit binding domain. Positions 188 to 240 (RNAAPDKAPGSGDRVSGSSQSPPNLKYKSTLKIKESTKERQGPDDKPPSKKSF) are disordered. Ser-205 and Ser-208 each carry phosphoserine. Residues 219–235 (KIKESTKERQGPDDKPP) are compositionally biased toward basic and acidic residues. Ser-403 bears the Phosphoserine mark. Tyr-404 is subject to Phosphotyrosine. 2 positions are modified to phosphoserine: Ser-635 and Ser-636.

This sequence belongs to the AKAP110 family. Interacts with ROPN1 and ROPN1L. Interacts with QRICH2. Post-translationally, phosphorylated by STK33 during sperm flagella assembly. Phosphorylated on tyrosine residues. Testis specific; only expressed in spermatids.

It localises to the cytoplasmic vesicle. The protein resides in the secretory vesicle. It is found in the acrosome. Its subcellular location is the cell projection. The protein localises to the cilium. It localises to the flagellum. Its function is as follows. Structural component of sperm fibrous sheath. Required for the formation of the subcellular structure of the sperm flagellum, sperm motility and male fertility. The sequence is that of A-kinase anchor protein 3 from Homo sapiens (Human).